We begin with the raw amino-acid sequence, 566 residues long: Tissue-type plasminogen activator (566 aa).

Residues 1–21 form the signal peptide; sequence MMSAMKTEFLCVLLLCGAVFT. Positions 22–33 are excised as a propeptide; sequence SPSQETYRRLRR. Residues 34–36 constitute a propeptide, removed by plasmin; the sequence is GAR. The 43-residue stretch at 40-82 folds into the Fibronectin type-I domain; sequence VTCRDGKTQMTYRQHDSWLRPLLRGNQVEHCWCDGGRAQCHSV. Cystine bridges form between Cys42/Cys72, Cys70/Cys79, Cys87/Cys98, Cys92/Cys109, Cys111/Cys120, Cys128/Cys209, Cys149/Cys191, Cys180/Cys204, Cys219/Cys300, Cys240/Cys282, Cys271/Cys295, Cys303/Cys434, Cys346/Cys362, Cys354/Cys423, Cys448/Cys523, Cys480/Cys496, and Cys513/Cys541. Positions 43–53 are important for binding to annexin A2; sequence RDGKTQMTYRQ. The EGF-like domain maps to 83 to 121; that stretch reads PVRSCSEPWCFNGGTCRQALYSSDFVCQCPEGFMGKLCE. Kringle domains follow at residues 128-209 and 219-300; these read CYKD…TPAC and CYTG…VPQC. Asn153 is a glycosylation site (N-linked (GlcNAc...) asparagine). Positions 315–565 constitute a Peptidase S1 domain; the sequence is IKGGLFADIT…YLDWIRDNTR (251 aa). Residues His361 and Asp410 each act as charge relay system in the active site. N-linked (GlcNAc...) asparagine glycosylation occurs at Asn487. The active-site Charge relay system is the Ser517.

The protein belongs to the peptidase S1 family. As to quaternary structure, heterodimer of chain A and chain B held by a disulfide bond. Binds to fibrin with high affinity. This interaction leads to an increase in the catalytic efficiency of the enzyme due to an increase in affinity for plasminogen. Similarly, binding to heparin increases the activation of plasminogen. Binds to annexin A2, cytokeratin-8, fibronectin and laminin. Binds to mannose receptor and the low-density lipoprotein receptor-related protein (LRP1); these proteins are involved in TPA clearance. Binds LRP1B; binding is followed by internalization and degradation. Forms heterodimer with SERPINA5. Interacts with SERPINE1. In complex with SERPINE1, interacts with SORL1. The single chain, almost fully active enzyme, can be further processed into a two-chain fully active form by a cleavage after Arg-314 catalyzed by plasmin, tissue kallikrein or factor Xa.

The protein localises to the secreted. Its subcellular location is the extracellular space. It carries out the reaction Specific cleavage of Arg-|-Val bond in plasminogen to form plasmin.. With respect to regulation, inhibited by SERPINA5. Inhibited by SERPINE1. Its function is as follows. Converts the abundant, but inactive, zymogen plasminogen to plasmin by hydrolyzing a single Arg-Val bond in plasminogen. By controlling plasmin-mediated proteolysis, it plays an important role in tissue remodeling and degradation, in cell migration and many other physiopathological events. During oocyte activation, plays a role in cortical granule reaction in the zona reaction, which contributes to the block to polyspermy. This chain is Tissue-type plasminogen activator (PLAT), found in Bos taurus (Bovine).